The sequence spans 193 residues: Oleosin S1-2 (193 aa).

Position 2 is an N-acetylalanine (alanine 2). The interval 2–39 is polar; sequence ADVRTHAHQVQVHPLRQHEGGIKVVYPQSGPSSTQVLA. 3 helical membrane-spanning segments follow: residues 37–57, 66–86, and 87–107; these read VLAVVAGVPVGGTLLTLAGLT, ILAFPLFLIFSPVIVPAAFVI, and GLAMTGFMASGAIGLTGLSSM. Residues 40-113 are hydrophobic; the sequence is VVAGVPVGGT…LSSMSWVLNH (74 aa). The interval 139–193 is disordered; sequence AGQRTKDAGQTIEDKAHDVRESKTYDVRDRDTKGHTASGGDRDTKTTREVRVATT. A compositionally biased stretch (basic and acidic residues) spans 142–193; sequence RTKDAGQTIEDKAHDVRESKTYDVRDRDTKGHTASGGDRDTKTTREVRVATT.

The protein belongs to the oleosin family.

Its subcellular location is the lipid droplet. It localises to the membrane. Its function is as follows. May have a structural role to stabilize the lipid body during desiccation of the seed by preventing coalescence of the oil. Probably interacts with both lipid and phospholipid moieties of lipid bodies. May also provide recognition signals for specific lipase anchorage in lipolysis during seedling growth. The chain is Oleosin S1-2 (S1) from Brassica napus (Rape).